The sequence spans 969 residues: Activity-dependent neuroprotective protein a (969 aa).

Residues 74–97 (FCCSDCPFASKYFSAYKNHFRNVH) form a C2H2-type 1 zinc finger. The C2H2-type 2; atypical zinc-finger motif lies at 107 to 129 (LNCSYCTYSGNKRTLETHVRLFH). 2 C2H2-type zinc fingers span residues 169–192 (YYCK…YREH) and 221–244 (IHCK…IEFH). A C2H2-type 5; atypical zinc finger spans residues 401–423 (KICTICNELFPESAYSAHFEKEH). The segment at 443–464 (SKCLYCNRYLPSDSLLNHMLVH) adopts a C2H2-type 6; atypical zinc-finger fold. A C2H2-type 7 zinc finger spans residues 466-489 (LSCPHCHSTFHEVEKIVAHNRLAH). The C2H2-type 8; atypical zinc finger occupies 583–608 (TLCPLCFTILKGPISDALAHHLRDSH). The segment at 623-647 (YKCIHCLGVYTSNMTASTITLHLVH) adopts a C2H2-type 9; atypical zinc-finger fold. Residues 659 to 689 (KPITTGLRSPGAGSLKRELVTPDPSDPKRRK) form a disordered region. The homeobox DNA-binding region spans 732-774 (AYFNRHPYPSQREVEKLAASLWLWKSDVASHFGNHRRLCDRDF). The segment at 911 to 949 (DVRANRSSPRVGPKVLDGSVSSSSPDEATWSGNMSSEES) is disordered. Residues 929–946 (SVSSSSPDEATWSGNMSS) show a composition bias toward polar residues.

As to quaternary structure, interacts with catenin beta-1/ctnnb1.

It is found in the nucleus. In terms of biological role, may be involved in transcriptional regulation. Positively modulates wnt-beta-catenin/ctnnb1 signaling. Required for embryonic neurogenesis. Required for progression through late erythroid differentiation. This Danio rerio (Zebrafish) protein is Activity-dependent neuroprotective protein a.